We begin with the raw amino-acid sequence, 306 residues long: MGFIAQFLEMLLAERALSKNSILSYKRDLFDFQNYLAKHKLSELNITTENIRDWIEYLASNDLQARSINRKISTIKSYYEFLISENHTAFNPVLNVDLPKYQNKLPEILSIAQIKSLLEHCSQDNSPEGIRLNAMIHLLYASGLRVSELVSLKLADILTNKTSKGEVRKIFSVLGKGNKERVIVINEQAVISIAKYLTIRGVFVNKAKPRNLIYLFPSSALAGYMTRQNFAILLKSAALYAGLNPEYISPHILRHSFASHLLEGGADLRVIQELLGHADISTTQIYTHLQTNHLKKALLRHPLNKN.

Residues 1–83 (MGFIAQFLEM…TIKSYYEFLI (83 aa)) enclose the Core-binding (CB) domain. A Tyr recombinase domain is found at 104–299 (KLPEILSIAQ…QTNHLKKALL (196 aa)). Catalysis depends on residues Arg145, Lys176, His251, Arg254, and His277. The active-site O-(3'-phospho-DNA)-tyrosine intermediate is the Tyr286.

The protein belongs to the 'phage' integrase family. XerD subfamily. In terms of assembly, forms a cyclic heterotetrameric complex composed of two molecules of XerC and two molecules of XerD.

The protein localises to the cytoplasm. In terms of biological role, site-specific tyrosine recombinase, which acts by catalyzing the cutting and rejoining of the recombining DNA molecules. The XerC-XerD complex is essential to convert dimers of the bacterial chromosome into monomers to permit their segregation at cell division. It also contributes to the segregational stability of plasmids. The protein is Tyrosine recombinase XerD of Rickettsia conorii (strain ATCC VR-613 / Malish 7).